The following is a 221-amino-acid chain: Riboflavin kinase (221 aa).

Positions 1–92 (MVTPEDLECL…YRLFGRQEKS (92 aa)) are H-T-H motif-like. The tract at residues 93–221 (LMLNGTVQSG…GDEVTIEVTL (129 aa)) is riboflavin kinase. 102–107 (GLGEGA) provides a ligand contact to CDP. Mg(2+) is bound by residues threonine 131 and asparagine 133. FMN is bound by residues threonine 188 and glutamate 196. Residue 201 to 204 (EGLR) coordinates CDP.

The protein belongs to the archaeal riboflavin kinase family. Mg(2+) is required as a cofactor.

It catalyses the reaction riboflavin + CTP = CDP + FMN + H(+). The protein operates within cofactor biosynthesis; FMN biosynthesis; FMN from riboflavin (CTP route): step 1/1. Catalyzes the CTP-dependent phosphorylation of riboflavin (vitamin B2) to form flavin mononucleotide (FMN). This chain is Riboflavin kinase (ribK), found in Methanospirillum hungatei JF-1 (strain ATCC 27890 / DSM 864 / NBRC 100397 / JF-1).